Reading from the N-terminus, the 288-residue chain is Diaminopimelate epimerase (288 aa).

Substrate contacts are provided by Asn14 and Asn67. Cys76 (proton donor) is an active-site residue. Substrate-binding positions include 77–78 (GN), Asn166, Asn199, and 217–218 (ER). The active-site Proton acceptor is Cys226. A substrate-binding site is contributed by 227–228 (GT).

Belongs to the diaminopimelate epimerase family. Homodimer.

The protein localises to the cytoplasm. The enzyme catalyses (2S,6S)-2,6-diaminopimelate = meso-2,6-diaminopimelate. It participates in amino-acid biosynthesis; L-lysine biosynthesis via DAP pathway; DL-2,6-diaminopimelate from LL-2,6-diaminopimelate: step 1/1. Its function is as follows. Catalyzes the stereoinversion of LL-2,6-diaminopimelate (L,L-DAP) to meso-diaminopimelate (meso-DAP), a precursor of L-lysine and an essential component of the bacterial peptidoglycan. In Bacillus cereus (strain B4264), this protein is Diaminopimelate epimerase.